Reading from the N-terminus, the 426-residue chain is 4-hydroxy-3-methylbut-2-en-1-yl diphosphate synthase (flavodoxin) (426 aa).

[4Fe-4S] cluster contacts are provided by Cys320, Cys323, Cys366, and Glu373.

This sequence belongs to the IspG family. The cofactor is [4Fe-4S] cluster.

The enzyme catalyses (2E)-4-hydroxy-3-methylbut-2-enyl diphosphate + oxidized [flavodoxin] + H2O + 2 H(+) = 2-C-methyl-D-erythritol 2,4-cyclic diphosphate + reduced [flavodoxin]. It participates in isoprenoid biosynthesis; isopentenyl diphosphate biosynthesis via DXP pathway; isopentenyl diphosphate from 1-deoxy-D-xylulose 5-phosphate: step 5/6. Its function is as follows. Converts 2C-methyl-D-erythritol 2,4-cyclodiphosphate (ME-2,4cPP) into 1-hydroxy-2-methyl-2-(E)-butenyl 4-diphosphate. The protein is 4-hydroxy-3-methylbut-2-en-1-yl diphosphate synthase (flavodoxin) of Wolbachia sp. subsp. Drosophila simulans (strain wRi).